Here is a 477-residue protein sequence, read N- to C-terminus: PTS system glucose-specific EIICB component (477 aa).

A PTS EIIC type-1 domain is found at 1-388 (MFKNVFANLQ…FNLDTPGREN (388 aa)). Transmembrane regions (helical) follow at residues 15 to 35 (SLMLPVSVLPIAGILLGIGSA), 51 to 71 (TGGSVFSNMPLIFAIGVALGF), 76 to 96 (GVAALAAVVSYGILIQTLTAV), 112 to 132 (HLSDTGILGGIIAGAISAYMF), 152 to 172 (FVPIISGLSAILIGVILSLIW), 191 to 211 (PILAFALYGLVERALVPFGLH), 250 to 270 (LSGGFIFKMYGLPGAALAIWH), 280 to 300 (IGSIMISAALTAFLTGITEPI), 304 to 324 (FIIVAPVLYVIHAILAGLSFP), and 357 to 377 (FPIIGILYGLLYYILFYLFII). The PTS EIIB type-1 domain occupies 399–477 (NEIAPYIITA…TAMDECIKNI (79 aa)). Residue Cys421 is the Phosphocysteine intermediate; for EIIB activity of the active site. The residue at position 421 (Cys421) is a Phosphocysteine.

The protein localises to the cell inner membrane. The enzyme catalyses N(pros)-phospho-L-histidyl-[protein] + D-glucose(out) = D-glucose 6-phosphate(in) + L-histidyl-[protein]. The phosphoenolpyruvate-dependent sugar phosphotransferase system (sugar PTS), a major carbohydrate active transport system, catalyzes the phosphorylation of incoming sugar substrates concomitantly with their translocation across the cell membrane. The enzyme II complex composed of PtsG and Crr is involved in glucose transport. This Buchnera aphidicola subsp. Acyrthosiphon pisum (strain APS) (Acyrthosiphon pisum symbiotic bacterium) protein is PTS system glucose-specific EIICB component (ptsG).